The following is a 123-amino-acid chain: UPF0102 protein Maqu_2464 (123 aa).

It belongs to the UPF0102 family.

The chain is UPF0102 protein Maqu_2464 from Marinobacter nauticus (strain ATCC 700491 / DSM 11845 / VT8) (Marinobacter aquaeolei).